An 893-amino-acid polypeptide reads, in one-letter code: Serine/threonine-protein kinase/endoribonuclease IRE1 (893 aa).

The signal sequence occupies residues 1–19; that stretch reads MRSLRRVLLQLVLLAGVAF. Residues 20–379 are Lumenal-facing; it reads RGVRFDDAAD…NSVTKFSYRW (360 aa). 4 N-linked (GlcNAc...) asparagine glycosylation sites follow: N105, N158, N259, and N351. A helical membrane pass occupies residues 380–397; that stretch reads LFPTFLMLLIMACLVKLA. Over 398–893 the chain is Cytoplasmic; the sequence is DASKYCRQFV…FSKYFLGSSA (496 aa). The segment at 451–478 is disordered; that stretch reads ASDKEGNGTGGSTEAQSNKAHDSTNVEL. The 269-residue stretch at 491–759 folds into the Protein kinase domain; the sequence is CVYSKEIGKG…AVYVMHHPFF (269 aa). ATP-binding positions include 497–505 and K519; that span reads IGKGSNGTV. Residue D625 is the Proton acceptor of the active site. A KEN domain is found at 762–890; the sequence is PELCLSFLRD…EEAFSKYFLG (129 aa).

This sequence belongs to the protein kinase superfamily. Ser/Thr protein kinase family. Homodimer; disulfide-linked. Dimer formation is driven by hydrophobic interactions within the N-terminal luminal domains and stabilized by disulfide bridges. In terms of processing, autophosphorylated. In terms of tissue distribution, expressed in roots, nodes, internodes, leaf sheaths, leaf blades, young ears and mature ears.

Its subcellular location is the endoplasmic reticulum membrane. It catalyses the reaction L-seryl-[protein] + ATP = O-phospho-L-seryl-[protein] + ADP + H(+). The catalysed reaction is L-threonyl-[protein] + ATP = O-phospho-L-threonyl-[protein] + ADP + H(+). Functionally, involved in endoplasmic reticulum (ER) stress response. Senses unfolded proteins in the lumen of the ER via its N-terminal domain which leads to enzyme auto-activation. The active endoribonuclease domain splices bZIP50 mRNA to generate a new C-terminus, converting it into a potent unfolded-protein response (UPR) transcriptional activator, which then induces transcription of UPR target genes, such as luminal-binding protein (BiP) chaperones. In Oryza sativa subsp. japonica (Rice), this protein is Serine/threonine-protein kinase/endoribonuclease IRE1.